We begin with the raw amino-acid sequence, 629 residues long: Solute carrier family 22 member 14 (629 aa).

The tract at residues Met1–Arg21 is disordered. Residues Met1–Arg67 lie on the Cytoplasmic side of the membrane. Polar residues predominate over residues Tyr7 to Ser16. A helical membrane pass occupies residues Leu68 to Phe88. The Extracellular portion of the chain corresponds to Leu89–Glu183. N-linked (GlcNAc...) asparagine glycosylation is found at Asn98, Asn116, Asn124, and Asn149. A helical membrane pass occupies residues Asn184 to Ser204. Topologically, residues Asp205 to Arg209 are cytoplasmic. Residues Tyr210 to Val230 form a helical membrane-spanning segment. Topologically, residues Ser231–Arg240 are extracellular. A helical membrane pass occupies residues Phe241 to Trp261. Residues Leu262–Gln269 lie on the Cytoplasmic side of the membrane. A helical membrane pass occupies residues Ala270 to Tyr290. The Extracellular segment spans residues Lys291–Trp295. Residues Arg296 to Leu316 traverse the membrane as a helical segment. The Cytoplasmic portion of the chain corresponds to Arg317–Lys378. A helical transmembrane segment spans residues Val379–Leu399. The Extracellular segment spans residues Lys400–Tyr409. A helical transmembrane segment spans residues Phe410 to Leu430. Topologically, residues Glu431–Lys436 are cytoplasmic. The chain crosses the membrane as a helical span at residues Trp437–Pro457. At Gln458–Thr463 the chain is on the extracellular side. Residues Ile464–Ile484 traverse the membrane as a helical segment. At Tyr485 to Ser496 the chain is on the cytoplasmic side. The helical transmembrane segment at Thr497–Phe517 threads the bilayer. At Lys518–Gln523 the chain is on the extracellular side. A helical transmembrane segment spans residues Leu524–Pro544. Over Glu545–Pro629 the chain is Cytoplasmic.

This sequence belongs to the major facilitator (TC 2.A.1) superfamily. Organic cation transporter (TC 2.A.1.19) family. As to expression, testis-specific (at protein level). Specifically expressed in male germ cells (at protein level).

It is found in the mitochondrion inner membrane. It localises to the cell projection. Its subcellular location is the cilium. The protein localises to the flagellum membrane. It catalyses the reaction riboflavin(in) = riboflavin(out). Functionally, riboflavin transporter localized at the inner mitochondrial membrane of the spermatozoa midpiece, which is required for male fertility. SLC22A14-mediated riboflavin transport is essential for spermatozoa energy generation and motility: riboflavin is the precursor of FMN and FAD, which are coenzymes of many enzymes in the TCA cycle (the citric acid cycle) in mitochondria. Required for sperm motility and normal sperm flagellar structure. The sequence is that of Solute carrier family 22 member 14 from Mus musculus (Mouse).